The primary structure comprises 301 residues: Phosphate transport system permease protein PstA 2 (301 aa).

Transmembrane regions (helical) follow at residues 36–56 (ACVC…IGVV), 83–103 (IIGT…VSVL), 127–147 (LSGI…VVYF), 149–169 (WGFS…PYIA), 209–229 (GIVT…APLL), and 274–294 (ALLL…INWL). Residues 83–288 (IIGTAVLAIG…VFLLLLIFIG (206 aa)) form the ABC transmembrane type-1 domain.

This sequence belongs to the binding-protein-dependent transport system permease family. CysTW subfamily.

It localises to the cell membrane. Its function is as follows. Part of the binding-protein-dependent transport system for phosphate; probably responsible for the translocation of the substrate across the membrane. This Mycobacterium bovis (strain ATCC BAA-935 / AF2122/97) protein is Phosphate transport system permease protein PstA 2 (pstA2).